We begin with the raw amino-acid sequence, 304 residues long: Ribonuclease BN (304 aa).

Positions 63, 65, 67, 68, 140, 211, and 269 each coordinate Zn(2+). Asp67 (proton acceptor) is an active-site residue.

Belongs to the RNase Z family. RNase BN subfamily. In terms of assembly, homodimer. It depends on Zn(2+) as a cofactor.

Functionally, zinc phosphodiesterase, which has both exoribonuclease and endoribonuclease activities. The sequence is that of Ribonuclease BN from Cronobacter sakazakii (strain ATCC BAA-894) (Enterobacter sakazakii).